A 169-amino-acid polypeptide reads, in one-letter code: Ribosome maturation factor RimM (169 aa).

One can recognise a PRC barrel domain in the interval 96 to 166 (EDEFYFADLI…AVVVRPVEVE (71 aa)).

It belongs to the RimM family. Binds ribosomal protein uS19.

The protein resides in the cytoplasm. An accessory protein needed during the final step in the assembly of 30S ribosomal subunit, possibly for assembly of the head region. Essential for efficient processing of 16S rRNA. May be needed both before and after RbfA during the maturation of 16S rRNA. It has affinity for free ribosomal 30S subunits but not for 70S ribosomes. The protein is Ribosome maturation factor RimM of Acidiphilium cryptum (strain JF-5).